The following is an 89-amino-acid chain: Small ribosomal subunit protein uS19 (89 aa).

This sequence belongs to the universal ribosomal protein uS19 family.

Its function is as follows. Protein S19 forms a complex with S13 that binds strongly to the 16S ribosomal RNA. This chain is Small ribosomal subunit protein uS19, found in Porphyromonas gingivalis (strain ATCC 33277 / DSM 20709 / CIP 103683 / JCM 12257 / NCTC 11834 / 2561).